The chain runs to 332 residues: MILAFSGCVDQSASDSTSEDATPKVLKIFHAGSLAVPFGEYETLYENEYTNVDVQRESAGSVACVRKITELNKTAEILASADYTLIPSMMMPDYADWYVMVAKNEIVIAYTENSQYYDEITSDNWYEIFQRDGVKYGFSSPNDDPCGYRSQMVVQLAEEAYGDSTIYDNLMLGNTNFEVNENADGTYCIVSPESIDVNEAKVFMRSKEVDLLGPLETGAYDYLFIYKSVANQHGLSYIELPEDINLGDYQNADEYAKASIFLTGQNKTIVAKPIVYGMTVPSNAEDYEEGVNFVKTVLEHPEVFENAGQPVISPAIAVGDVPEEISDLVVMG.

This sequence belongs to the bacterial solute-binding protein 1 family. WtpA subfamily.

This is an uncharacterized protein from Methanococcus maripaludis (strain DSM 14266 / JCM 13030 / NBRC 101832 / S2 / LL).